Consider the following 293-residue polypeptide: Ethanolamine ammonia-lyase small subunit (293 aa).

2 residues coordinate adenosylcob(III)alamin: valine 207 and glutamate 228.

This sequence belongs to the EutC family. The basic unit is a heterodimer which dimerizes to form tetramers. The heterotetramers trimerize; 6 large subunits form a core ring with 6 small subunits projecting outwards. The cofactor is adenosylcob(III)alamin.

The protein resides in the bacterial microcompartment. It carries out the reaction ethanolamine = acetaldehyde + NH4(+). The protein operates within amine and polyamine degradation; ethanolamine degradation. Functionally, catalyzes the deamination of various vicinal amino-alcohols to oxo compounds. Allows this organism to utilize ethanolamine as the sole source of nitrogen and carbon in the presence of external vitamin B12. The chain is Ethanolamine ammonia-lyase small subunit from Listeria monocytogenes serotype 4b (strain CLIP80459).